Here is a 624-residue protein sequence, read N- to C-terminus: Chaperone protein HtpG (624 aa).

An a; substrate-binding region spans residues 1–336; sequence MKTQKKEVYN…SSDLPLNISR (336 aa). The b stretch occupies residues 337–552; the sequence is EILQDNSITE…STEMTTQMAK (216 aa). Positions 553–624 are c; that stretch reads LFSAAGQSVP…ISRMNKLLIK (72 aa).

It belongs to the heat shock protein 90 family. Homodimer.

It is found in the cytoplasm. Its function is as follows. Molecular chaperone. Has ATPase activity. This is Chaperone protein HtpG from Buchnera aphidicola subsp. Acyrthosiphon pisum (strain APS) (Acyrthosiphon pisum symbiotic bacterium).